Consider the following 291-residue polypeptide: Phytanoyl-CoA dioxygenase domain-containing protein 1 (291 aa).

Thr55 carries the post-translational modification Phosphothreonine. 2-oxoglutarate-binding positions include Lys102, Met141, 156 to 158 (HQD), and Trp174. Residues His156 and Asp158 each contribute to the Fe cation site. Fe cation is bound at residue His246. 2-oxoglutarate is bound by residues Ser248 and Arg257.

Belongs to the PhyH family. PHYHD1 subfamily. Requires Fe cation as cofactor.

Its activity is regulated as follows. Activity is increased by ascorbate. Inhibited by myristoyl-CoA. Its function is as follows. 2-oxoglutarate(2OG)-dependent dioxygenase that catalyzes the conversion of 2-oxoglutarate to succinate and CO(2) in an iron-dependent manner. However, does not couple 2OG turnover to the hydroxylation of acyl-coenzyme A derivatives, implying that it is not directly involved in phytanoyl coenzyme-A metabolism. Does not show detectable activity towards fatty acid CoA thioesters. Isoform 2 probably lacks enzyme activity. Functionally, isoform 3 probably lacks enzyme activity. The protein is Phytanoyl-CoA dioxygenase domain-containing protein 1 of Homo sapiens (Human).